The primary structure comprises 253 residues: 5'/3'-nucleotidase SurE (253 aa).

A divalent metal cation contacts are provided by aspartate 8, aspartate 9, serine 39, and asparagine 92.

The protein belongs to the SurE nucleotidase family. It depends on a divalent metal cation as a cofactor.

The protein resides in the cytoplasm. The catalysed reaction is a ribonucleoside 5'-phosphate + H2O = a ribonucleoside + phosphate. It catalyses the reaction a ribonucleoside 3'-phosphate + H2O = a ribonucleoside + phosphate. The enzyme catalyses [phosphate](n) + H2O = [phosphate](n-1) + phosphate + H(+). In terms of biological role, nucleotidase with a broad substrate specificity as it can dephosphorylate various ribo- and deoxyribonucleoside 5'-monophosphates and ribonucleoside 3'-monophosphates with highest affinity to 3'-AMP. Also hydrolyzes polyphosphate (exopolyphosphatase activity) with the preference for short-chain-length substrates (P20-25). Might be involved in the regulation of dNTP and NTP pools, and in the turnover of 3'-mononucleotides produced by numerous intracellular RNases (T1, T2, and F) during the degradation of various RNAs. This is 5'/3'-nucleotidase SurE from Shigella boydii serotype 18 (strain CDC 3083-94 / BS512).